Here is a 548-residue protein sequence, read N- to C-terminus: Membrane protein insertase YidC (548 aa).

Residues 6-26 (NLLVIALLFVSFMIWQAWEQD) traverse the membrane as a helical segment. Residues 28–56 (NPQPQTQQTTQTTTTAAGSAADQGVPASG) are disordered. Residues 29–42 (PQPQTQQTTQTTTT) show a composition bias toward low complexity. 4 helical membrane-spanning segments follow: residues 350–370 (FVGNWGFSIIIITFIVRGIMY), 424–444 (FPLIIQMPIFLALYYMLMGSI), 458–478 (LSAQDPYYILPILMGVTMFFI), and 499–519 (PVIFTVFFLWFPSGLVLYYIV).

The protein belongs to the OXA1/ALB3/YidC family. Type 1 subfamily. In terms of assembly, interacts with the Sec translocase complex via SecD. Specifically interacts with transmembrane segments of nascent integral membrane proteins during membrane integration.

Its subcellular location is the cell inner membrane. Functionally, required for the insertion and/or proper folding and/or complex formation of integral membrane proteins into the membrane. Involved in integration of membrane proteins that insert both dependently and independently of the Sec translocase complex, as well as at least some lipoproteins. Aids folding of multispanning membrane proteins. This is Membrane protein insertase YidC from Salmonella agona (strain SL483).